A 150-amino-acid polypeptide reads, in one-letter code: UPF0756 membrane protein PM0771 (150 aa).

The next 4 membrane-spanning stretches (helical) occupy residues 12 to 34 (LVVLILLGVLSNNSSVTISAAIL), 52 to 72 (HGITLGIIILTIGVLSPIVSG), 79 to 99 (LAVFLNWKMWLAVAVGLLVAW), and 123 to 143 (ILGVAFVGGIPVGPLIAAGIL).

Belongs to the UPF0756 family.

The protein resides in the cell membrane. This is UPF0756 membrane protein PM0771 from Pasteurella multocida (strain Pm70).